The primary structure comprises 193 residues: dTTP/UTP pyrophosphatase (193 aa).

The Proton acceptor role is filled by aspartate 68.

The protein belongs to the Maf family. YhdE subfamily. It depends on a divalent metal cation as a cofactor.

The protein resides in the cytoplasm. It carries out the reaction dTTP + H2O = dTMP + diphosphate + H(+). The catalysed reaction is UTP + H2O = UMP + diphosphate + H(+). Its function is as follows. Nucleoside triphosphate pyrophosphatase that hydrolyzes dTTP and UTP. May have a dual role in cell division arrest and in preventing the incorporation of modified nucleotides into cellular nucleic acids. This is dTTP/UTP pyrophosphatase from Ruegeria sp. (strain TM1040) (Silicibacter sp.).